A 123-amino-acid chain; its full sequence is Small ribosomal subunit protein uS12 (123 aa).

Position 89 is a 3-methylthioaspartic acid (D89).

It belongs to the universal ribosomal protein uS12 family. In terms of assembly, part of the 30S ribosomal subunit. Contacts proteins S8 and S17. May interact with IF1 in the 30S initiation complex.

Functionally, with S4 and S5 plays an important role in translational accuracy. In terms of biological role, interacts with and stabilizes bases of the 16S rRNA that are involved in tRNA selection in the A site and with the mRNA backbone. Located at the interface of the 30S and 50S subunits, it traverses the body of the 30S subunit contacting proteins on the other side and probably holding the rRNA structure together. The combined cluster of proteins S8, S12 and S17 appears to hold together the shoulder and platform of the 30S subunit. This is Small ribosomal subunit protein uS12 from Rhizobium etli (strain ATCC 51251 / DSM 11541 / JCM 21823 / NBRC 15573 / CFN 42).